We begin with the raw amino-acid sequence, 680 residues long: Probable Xaa-Pro aminopeptidase P (680 aa).

The Mn(2+) site is built by D477, D488, E586, and E600.

The protein belongs to the peptidase M24B family. Mn(2+) is required as a cofactor.

It carries out the reaction Release of any N-terminal amino acid, including proline, that is linked to proline, even from a dipeptide or tripeptide.. In terms of biological role, catalyzes the removal of a penultimate prolyl residue from the N-termini of peptides. The sequence is that of Probable Xaa-Pro aminopeptidase P (AMPP) from Podospora anserina (strain S / ATCC MYA-4624 / DSM 980 / FGSC 10383) (Pleurage anserina).